The chain runs to 176 residues: Adenine phosphoribosyltransferase (176 aa).

It belongs to the purine/pyrimidine phosphoribosyltransferase family. As to quaternary structure, homodimer.

It localises to the cytoplasm. It catalyses the reaction AMP + diphosphate = 5-phospho-alpha-D-ribose 1-diphosphate + adenine. It participates in purine metabolism; AMP biosynthesis via salvage pathway; AMP from adenine: step 1/1. Its function is as follows. Catalyzes a salvage reaction resulting in the formation of AMP, that is energically less costly than de novo synthesis. This chain is Adenine phosphoribosyltransferase, found in Bacteroides thetaiotaomicron (strain ATCC 29148 / DSM 2079 / JCM 5827 / CCUG 10774 / NCTC 10582 / VPI-5482 / E50).